Here is a 947-residue protein sequence, read N- to C-terminus: Protocadherin alpha-4 (947 aa).

A signal peptide spans 1–29; sequence MEFSWGSGQESQRLLLSFLFLAIWEPGNS. 6 Cadherin domains span residues 30 to 133, 134 to 242, 243 to 350, 351 to 455, 456 to 565, and 573 to 681; these read QLHY…PPTF, PTTQ…SPVF, DRSL…APEL, EFKS…APAF, AQPE…APTL, and SGGI…APSR. The Extracellular segment spans residues 30–697; the sequence is QLHYSIPEEA…NAEASLVDVN (668 aa). Cysteines 96 and 102 form a disulfide. N-linked (GlcNAc...) asparagine glycans are attached at residues Asn257 and Asn265. Asn548 carries N-linked (GlcNAc...) asparagine glycosylation. A helical membrane pass occupies residues 698–718; sequence VYLIIAICAVSSLLVLTLLLY. Residues 719–947 lie on the Cytoplasmic side of the membrane; sequence SALRCSTVPS…GNSTTDNSDQ (229 aa). PXXP repeat units follow at residues 734–737, 774–777, 796–799, 829–832, 870–873, and 888–891; these read PPKP, PSLS, PRQP, PGGP, PGNP, and PGSP. The 6 X 4 AA repeats of P-X-X-P stretch occupies residues 734–891; the sequence is PPKPVMVCSS…PDKFIIPGSP (158 aa). Residues 738–947 form a required for interaction with FYN region; it reads VMVCSSAVGS…GNSTTDNSDQ (210 aa). Disordered regions lie at residues 761–805 and 824–853; these read GEYP…DWRY and ILRA…EVSP. The segment at 897-947 is disordered; it reads RQESANNQIDKSDFITFGKKEETKKKKKKKKGNKTQEKKEKGNSTTDNSDQ. Residues 906–920 show a composition bias toward basic and acidic residues; that stretch reads DKSDFITFGKKEETK.

As to quaternary structure, forms homodimers in trans (molecules expressed by two different cells). Forms promiscuous heterodimers in cis (at the plasma membrane of the same cell) with other protocadherins. Interacts with FYN. As to expression, detected in brain.

It is found in the cell membrane. Calcium-dependent cell-adhesion protein involved in cells self-recognition and non-self discrimination. Thereby, it is involved in the establishment and maintenance of specific neuronal connections in the brain. This Rattus norvegicus (Rat) protein is Protocadherin alpha-4.